The sequence spans 343 residues: Holliday junction branch migration complex subunit RuvB (343 aa).

A large ATPase domain (RuvB-L) region spans residues 4–193; that stretch reads TDNLTAAQPQ…FGIVSRLEFY (190 aa). ATP is bound by residues Leu-32, Arg-33, Gly-74, Lys-77, Thr-78, Thr-79, 140–142, Arg-183, Tyr-193, and Arg-230; that span reads EDY. Thr-78 serves as a coordination point for Mg(2+). The small ATPAse domain (RuvB-S) stretch occupies residues 194–264; the sequence is ENRDLTTIVS…VADAALSMLD (71 aa). Residues 267–343 are head domain (RuvB-H); sequence AQGLDVMDRK…YLHFGLPVEK (77 aa). DNA-binding residues include Arg-322 and Arg-327.

This sequence belongs to the RuvB family. Homohexamer. Forms an RuvA(8)-RuvB(12)-Holliday junction (HJ) complex. HJ DNA is sandwiched between 2 RuvA tetramers; dsDNA enters through RuvA and exits via RuvB. An RuvB hexamer assembles on each DNA strand where it exits the tetramer. Each RuvB hexamer is contacted by two RuvA subunits (via domain III) on 2 adjacent RuvB subunits; this complex drives branch migration. In the full resolvosome a probable DNA-RuvA(4)-RuvB(12)-RuvC(2) complex forms which resolves the HJ.

Its subcellular location is the cytoplasm. It carries out the reaction ATP + H2O = ADP + phosphate + H(+). Functionally, the RuvA-RuvB-RuvC complex processes Holliday junction (HJ) DNA during genetic recombination and DNA repair, while the RuvA-RuvB complex plays an important role in the rescue of blocked DNA replication forks via replication fork reversal (RFR). RuvA specifically binds to HJ cruciform DNA, conferring on it an open structure. The RuvB hexamer acts as an ATP-dependent pump, pulling dsDNA into and through the RuvAB complex. RuvB forms 2 homohexamers on either side of HJ DNA bound by 1 or 2 RuvA tetramers; 4 subunits per hexamer contact DNA at a time. Coordinated motions by a converter formed by DNA-disengaged RuvB subunits stimulates ATP hydrolysis and nucleotide exchange. Immobilization of the converter enables RuvB to convert the ATP-contained energy into a lever motion, pulling 2 nucleotides of DNA out of the RuvA tetramer per ATP hydrolyzed, thus driving DNA branch migration. The RuvB motors rotate together with the DNA substrate, which together with the progressing nucleotide cycle form the mechanistic basis for DNA recombination by continuous HJ branch migration. Branch migration allows RuvC to scan DNA until it finds its consensus sequence, where it cleaves and resolves cruciform DNA. In Neisseria gonorrhoeae (strain NCCP11945), this protein is Holliday junction branch migration complex subunit RuvB.